We begin with the raw amino-acid sequence, 362 residues long: O-methyltransferase 13 (362 aa).

Residues serine 181, glycine 205, aspartate 228, aspartate 248, and lysine 262 each coordinate S-adenosyl-L-homocysteine. An S-adenosyl-L-methionine-binding site is contributed by aspartate 228. Histidine 266 serves as the catalytic Proton acceptor.

Belongs to the class I-like SAM-binding methyltransferase superfamily. Cation-independent O-methyltransferase family. Homodimer. Mainly expressed in vascular and cortical tissues.

It catalyses the reaction dopamine + S-adenosyl-L-methionine = 3-methoxytyramine + S-adenosyl-L-homocysteine + H(+). Its pathway is aromatic compound metabolism. It functions in the pathway alkaloid biosynthesis. Functionally, O-methyltransferase participating in the biosynthesis of natural products derived from phenylethylamine, including mescaline, a natural hallucinogen potentially used in psychotherapeutic treatments. Catalyzes the O-methylation of dopamine and 4,5-dihydroxy-3-methoxyphenethylamine. In Lophophora williamsii (Peyote), this protein is O-methyltransferase 13.